A 604-amino-acid chain; its full sequence is Replication protein E1 (604 aa).

The short motif at 76–78 (KRK) is the Nuclear localization signal element. Phosphoserine; by host occurs at positions 81 and 89. A Nuclear export signal motif is present at residues 88 to 97 (LSPRLESISL). The interval 144–307 (GSGAIDIDYL…TILGHQNAEA (164 aa)) is DNA-binding region. The SF3 helicase domain occupies 406 to 556 (VNFITFLAAF…FPMKPDNTPQ (151 aa)). 432-439 (GPPNSGKS) lines the ATP pocket. Residue Lys-513 forms a Glycyl lysine isopeptide (Lys-Gly) (interchain with G-Cter in SUMO) linkage. The interval 579–604 (DQEEEGQHGESQRAFQCSARSANEHI) is disordered. The segment covering 591–604 (RAFQCSARSANEHI) has biased composition (polar residues).

It belongs to the papillomaviridae E1 protein family. Can form hexamers. Interacts with E2 protein; this interaction increases E1 DNA binding specificity. Interacts with host DNA polymerase subunit POLA2. Interacts with host single stranded DNA-binding protein RPA1. Interacts with host TOP1; this interaction stimulates the enzymatic activity of TOP1. In terms of processing, phosphorylated. Post-translationally, sumoylated.

It is found in the host nucleus. The enzyme catalyses Couples ATP hydrolysis with the unwinding of duplex DNA by translocating in the 3'-5' direction.. It carries out the reaction ATP + H2O = ADP + phosphate + H(+). ATP-dependent DNA 3'-5' helicase required for initiation of viral DNA replication. It forms a complex with the viral E2 protein. The E1-E2 complex binds to the replication origin which contains binding sites for both proteins. During the initial step, a dimer of E1 interacts with a dimer of protein E2 leading to a complex that binds the viral origin of replication with high specificity. Then, a second dimer of E1 displaces the E2 dimer in an ATP-dependent manner to form the E1 tetramer. Following this, two E1 monomers are added to each half of the site, which results in the formation of two E1 trimers on the viral ori. Subsequently, two hexamers will be created. The double hexamer acts as a bi-directional helicase machinery and unwinds the viral DNA and then recruits the host DNA polymerase to start replication. This is Replication protein E1 from Human papillomavirus 12.